A 560-amino-acid polypeptide reads, in one-letter code: Zinc finger protein 250 (560 aa).

Positions 22 to 93 (LTFEDVAVLL…DRKGAKKSQG (72 aa)) constitute a KRAB domain. Glycyl lysine isopeptide (Lys-Gly) (interchain with G-Cter in SUMO2) cross-links involve residues lysine 125, lysine 136, lysine 148, and lysine 162. The segment at 199-221 (YMCVECGKCFGRSSHLLQHQRIH) adopts a C2H2-type 1 zinc-finger fold. A Glycyl lysine isopeptide (Lys-Gly) (interchain with G-Cter in SUMO2) cross-link involves residue lysine 225. C2H2-type zinc fingers lie at residues 227–249 (YVCSVCGKAFSQSSVLSKHRRIH), 255–277 (YECNECGKAFRVSSDLAQHHKIH), 283–305 (HECLECRKAFTQLSHLIQHQRIH), 311–333 (YVCPLCGKAFNHSTVLRSHQRVH), 339–361 (HRCNECGKTFSVKRTLLQHQRIH), 367–389 (YTCSECGKAFSDRSVLIQHHNVH), and 395–417 (YECSECGKTFSHRSTLMNHERIH). Residue lysine 421 forms a Glycyl lysine isopeptide (Lys-Gly) (interchain with G-Cter in SUMO2) linkage. 5 C2H2-type zinc fingers span residues 423 to 445 (YACYECGKAFVQHSHLIQHQRVH), 451 to 473 (YVCGECGHAFSARRSLIQHERIH), 479 to 501 (FQCTECGKAFSLKATLIVHLRTH), 507 to 529 (YECNSCGKAFSQYSVLIQHQRIH), and 535 to 557 (YECGECGRAFNQHGHLIQHQKVH).

This sequence belongs to the krueppel C2H2-type zinc-finger protein family.

The protein resides in the nucleus. In terms of biological role, may be involved in transcriptional regulation. The protein is Zinc finger protein 250 (ZNF250) of Homo sapiens (Human).